The chain runs to 1488 residues: MIERGKFRSLTLINWNGFFARTFDLDELVTTLSGGNGAGKSTTMAAFVTALIPDLTLLHFRNTTEAGATSGSRDKGLHGKLKAGVCYSMLDTINSRHQRVVVGVRLQQVAGRDRKVDIKPFAIQGLPMSVQPTQLVTETLNERQARVLSLAELKDKLDEMEGVQFKQFNSITDYHSLMFDLGIIARRLRSASDRSKFYRLIEASLYGGISSAITRSLRDYLLPENSGVRKAFQDMEAALRENRLTLEAIRVTQSDRDLFKHLISEATDYVAADYMRHANERRVHLDQALAFRRELYTSRKQLAAEQYKHVDMARELGEHNGAEGSLEADYQAASDHLNLVQTALRQQEKIERYEADLEELQIRLEEQNEVVAEAAEMQDENEARAEAAELEVDELKSQLADYQQALDVQQTRAIQYNQAISALARAKELCHLPDLTPESAAEWLDTFQAKEQEATEKLLSLEQKMSVAQTAHSQFEQAYQLVAAINGPLARSEAWDVARELLRDGVNQRHLAEQVQPLRMRLSELEQRLREQQEAERLLAEFCKRQGKNFDIDELEALHQELEARIASLSDSVSSASEQRMALRQEQEQLQSRIQHLMQRAPVWLAAQNSLNQLSEQCGEEFTSSQEVTEYLQQLLEREREAIVERDEVGARKNAVDEEIERLSQPGGAEDQRLNALAERFGGVLLSEIYDDVSLEDAPYFSALYGPSRHAIVVPDLSQIAEQLEGLTDCPEDLYLIEGDPQSFDDSVFSVDELEKAVVVKIADRQWRYSRFPSLPIFGRAARENRIESLHAEREVLSERFATLSFDVQKTQRLHQAFSRFIGSHLSVAFEDDPEAEIRRLNGRRVELERALATHENDNQQQRLQFEQAKEGVSALNRLLPRLNLLADETLADRVDEIQERLDEAQEAARFVQQYGNQLAKLEPVVSVLQSDPEQFEQLKEDYAWSQQMQRDARQQAFALAEVVERRAHFSYSDSAEMLSGNSDLNEKLRQRLEQAEAERTRAREALRSHAAQLSQYSQVLASLKSSYDTKKELLNDLQRELQDIGVRADSGAEERARQRRDELHAQLSNNRSRRNQLEKALTFCEAEMENLTRKLRKLERDYHEMREQVVTAKAGWCAVMRMVKDNGVERRLHRRELAYLSADELRSMSDKALGALRLAVADNEHLRDVLRLSEDPKRPERKIQFFVAVYQHLRERIRQDIIRTDDPVEAIEQMEIELSRLTEELTSREQKLAISSRSVANIIRKTIQREQNRIRMLNQGLQSVSFGQVNSVRLNVNVRETHATLLDVLSEQQEQHQDLFNSNRLTFSEALAKLYQRLNPQIDMGQRTPQTIGEELLDYRNYLEMEVEVNRGSDGWLRAESGALSTGEAIGTGMSILVMVVQSWEDEARRLRGKDISPCRLLFLDEAARLDARSIATLFELCERLQMQLIIAAPENISPEKGTTYKLVRKVFQNTEHVHVVGLRGFAPQLPETLPGTQTEDTPSEAS.

34–41 (GGNGAGKS) provides a ligand contact to ATP. Coiled-coil stretches lie at residues 326–418 (LEAD…QYNQ), 444–472 (LDTF…QTAH), and 509–602 (RHLA…QRAP). Positions 666-783 (PGGAEDQRLN…SLPIFGRAAR (118 aa)) are flexible hinge. 3 coiled-coil regions span residues 835–923 (EAEI…AKLE), 977–1116 (EMLS…AKAG), and 1209–1265 (VEAI…LQSV).

Belongs to the SMC family. MukB subfamily. Homodimerization via its hinge domain. Binds to DNA via its C-terminal region. Interacts, and probably forms a ternary complex, with MukE and MukF via its C-terminal region. The complex formation is stimulated by calcium or magnesium. Interacts with tubulin-related protein FtsZ.

Its subcellular location is the cytoplasm. It localises to the nucleoid. Its function is as follows. Plays a central role in chromosome condensation, segregation and cell cycle progression. Functions as a homodimer, which is essential for chromosome partition. Involved in negative DNA supercoiling in vivo, and by this means organize and compact chromosomes. May achieve or facilitate chromosome segregation by condensation DNA from both sides of a centrally located replisome during cell division. The protein is Chromosome partition protein MukB of Salmonella paratyphi B (strain ATCC BAA-1250 / SPB7).